The chain runs to 486 residues: Bifunctional protein HldE (486 aa).

The segment at 1–331 (MSTNVADLLH…NALTAESVPV (331 aa)) is ribokinase. 207–210 (NLGE) serves as a coordination point for ATP. The active site involves Asp-276. Positions 358–486 (VTNGCFDLLH…STTKLIEKGH (129 aa)) are cytidylyltransferase.

The protein in the N-terminal section; belongs to the carbohydrate kinase PfkB family. It in the C-terminal section; belongs to the cytidylyltransferase family. In terms of assembly, homodimer.

The catalysed reaction is D-glycero-beta-D-manno-heptose 7-phosphate + ATP = D-glycero-beta-D-manno-heptose 1,7-bisphosphate + ADP + H(+). It catalyses the reaction D-glycero-beta-D-manno-heptose 1-phosphate + ATP + H(+) = ADP-D-glycero-beta-D-manno-heptose + diphosphate. It participates in nucleotide-sugar biosynthesis; ADP-L-glycero-beta-D-manno-heptose biosynthesis; ADP-L-glycero-beta-D-manno-heptose from D-glycero-beta-D-manno-heptose 7-phosphate: step 1/4. Its pathway is nucleotide-sugar biosynthesis; ADP-L-glycero-beta-D-manno-heptose biosynthesis; ADP-L-glycero-beta-D-manno-heptose from D-glycero-beta-D-manno-heptose 7-phosphate: step 3/4. Functionally, catalyzes the phosphorylation of D-glycero-D-manno-heptose 7-phosphate at the C-1 position to selectively form D-glycero-beta-D-manno-heptose-1,7-bisphosphate. Its function is as follows. Catalyzes the ADP transfer from ATP to D-glycero-beta-D-manno-heptose 1-phosphate, yielding ADP-D-glycero-beta-D-manno-heptose. In Koribacter versatilis (strain Ellin345), this protein is Bifunctional protein HldE.